Consider the following 110-residue polypeptide: Iron-sulfur cluster assembly protein CyaY (110 aa).

Belongs to the frataxin family.

Its function is as follows. Involved in iron-sulfur (Fe-S) cluster assembly. May act as a regulator of Fe-S biogenesis. The polypeptide is Iron-sulfur cluster assembly protein CyaY (Pseudomonas entomophila (strain L48)).